A 170-amino-acid polypeptide reads, in one-letter code: Myosin regulatory light chain 11 (170 aa).

At Ala-2 the chain carries N,N,N-trimethylalanine. Phosphoserine is present on residues Ser-16 and Ser-17. Thr-26 and Thr-36 each carry phosphothreonine. Residues 26–61 form the EF-hand 1 domain; it reads TQIQEFKEAFTVIDQNRDGIIDKEDLRDTFAAMGRL. Residues Asp-39, Asn-41, Asp-43, and Asp-50 each contribute to the Ca(2+) site. Ser-76 is subject to Phosphoserine. EF-hand domains lie at 96–131 and 132–167; these read DPED…QCDR and FSQE…GDAK. Position 102 is a phosphothreonine (Thr-102).

As to quaternary structure, myosin is a hexamer of 2 heavy chains and 4 light chains. In terms of processing, n,N,N-trimethylalanine found in this myosin light chain would not have been detected in the N-terminal tryptic peptide in PubMed:863872 and PubMed:352892 because it would remain trimethylated and ninhydrin negative after hydrolysis.

Myosin regulatory subunit that plays an essential role to maintain muscle integrity during early development. Plays a role in muscle contraction. This is Myosin regulatory light chain 11 (MYL11) from Oryctolagus cuniculus (Rabbit).